The primary structure comprises 412 residues: Putative oxidoreductase bli-4, mitochondrial (412 aa).

A mitochondrion-targeting transit peptide spans Met1–Tyr55. Ile108, Asn120, Asn186, Tyr269, Lys273, Val308, Thr310, and Gln312 together coordinate NADP(+). Tyr269 serves as the catalytic Proton donor. The Lowers pKa of active site Tyr role is filled by Lys273.

This sequence belongs to the short-chain dehydrogenases/reductases (SDR) family.

The protein resides in the mitochondrion. In terms of biological role, may play a role as an NAD-dependent dehydrogenase in the mitochondria. This is Putative oxidoreductase bli-4, mitochondrial (bli-4) from Neurospora crassa (strain ATCC 24698 / 74-OR23-1A / CBS 708.71 / DSM 1257 / FGSC 987).